A 228-amino-acid chain; its full sequence is Lipoprotein-releasing system ATP-binding protein LolD (228 aa).

Residues 6–228 (LRCKELSKSY…KNGILHKEQG (223 aa)) form the ABC transporter domain. Residue 42–49 (GASGSGKS) coordinates ATP.

This sequence belongs to the ABC transporter superfamily. Lipoprotein translocase (TC 3.A.1.125) family. The complex is composed of two ATP-binding proteins (LolD) and two transmembrane proteins (LolC and LolE).

It is found in the cell inner membrane. Its function is as follows. Part of the ABC transporter complex LolCDE involved in the translocation of mature outer membrane-directed lipoproteins, from the inner membrane to the periplasmic chaperone, LolA. Responsible for the formation of the LolA-lipoprotein complex in an ATP-dependent manner. This chain is Lipoprotein-releasing system ATP-binding protein LolD, found in Idiomarina loihiensis (strain ATCC BAA-735 / DSM 15497 / L2-TR).